The following is a 396-amino-acid chain: ATP phosphoribosyltransferase regulatory subunit (396 aa).

It belongs to the class-II aminoacyl-tRNA synthetase family. HisZ subfamily. Heteromultimer composed of HisG and HisZ subunits.

The protein localises to the cytoplasm. It functions in the pathway amino-acid biosynthesis; L-histidine biosynthesis; L-histidine from 5-phospho-alpha-D-ribose 1-diphosphate: step 1/9. Functionally, required for the first step of histidine biosynthesis. May allow the feedback regulation of ATP phosphoribosyltransferase activity by histidine. This chain is ATP phosphoribosyltransferase regulatory subunit, found in Cellvibrio japonicus (strain Ueda107) (Pseudomonas fluorescens subsp. cellulosa).